The primary structure comprises 81 residues: Putative membrane protein insertion efficiency factor (81 aa).

This sequence belongs to the UPF0161 family.

The protein resides in the cell inner membrane. In terms of biological role, could be involved in insertion of integral membrane proteins into the membrane. The sequence is that of Putative membrane protein insertion efficiency factor from Thermosipho melanesiensis (strain DSM 12029 / CIP 104789 / BI429).